The following is a 228-amino-acid chain: MNKPVFIALDFPNLKTAFDFLNKFPSHEKPAVKVGMELFYAEGPKIIQQLRQKGYKVFLDLKLYDIPHTVAAAVRSLLALDVQYLTIHSLGGLKMMEAAVDAAEGKIKLLAVTQLTSISANEMRGTQLTSATIEQSVKHLTQLALLAGVDGTISSPLEANIIKQITPDDFLKITPGIRLFNDQNGDQIRITTPKKAKEFGASGLVVGRSITQAADPLSVYRKILEEFE.

Substrate-binding positions include Asp-10, Lys-33, 60-69 (DLKLYDIPHT), Thr-116, Arg-178, Gln-187, Gly-207, and Arg-208. Catalysis depends on Lys-62, which acts as the Proton donor.

The protein belongs to the OMP decarboxylase family. Type 1 subfamily. Homodimer.

It carries out the reaction orotidine 5'-phosphate + H(+) = UMP + CO2. Its pathway is pyrimidine metabolism; UMP biosynthesis via de novo pathway; UMP from orotate: step 2/2. Catalyzes the decarboxylation of orotidine 5'-monophosphate (OMP) to uridine 5'-monophosphate (UMP). This chain is Orotidine 5'-phosphate decarboxylase, found in Oenococcus oeni (strain ATCC BAA-331 / PSU-1).